We begin with the raw amino-acid sequence, 969 residues long: Chromosome transmission fidelity protein 18 homolog (969 aa).

The interval 30–97 (EGTRDQAPPG…APSSPMVKRP (68 aa)) is disordered. A Phosphothreonine modification is found at T51. S221 carries the post-translational modification Phosphoserine. Disordered stretches follow at residues 250–269 (SEGE…APGQ) and 318–340 (RKPR…GKWK). Over residues 257–268 (LEGPPAEEPAPG) the composition is skewed to low complexity. 369–376 (GPPGLGKT) lines the ATP pocket. Positions 856 to 889 (ARSGPQVDQGSSGPASLWTDSGEKGTRQPAPRNH) are disordered. Residues 876-889 (SGEKGTRQPAPRNH) are compositionally biased toward basic and acidic residues.

The protein belongs to the activator 1 small subunits family. CTF18 subfamily. In terms of assembly, component of the CTF18-RFC complex, which consists of CTF18, CTF8, DCC1, RFC2, RFC3, RFC4 and RFC5. During assembly of the CTF18-RFC complex, CTF18 may first assemble into a subcomplex with RFC2, RFC3, RFC4 and RFC5. CTF18 then interacts directly with CTF8, which in turn interacts with DCC1. The CTF18-RFC complex associates with PCNA and with DNA polymerase POLH. The CTF18-RFC complex does not interact with the Rad9/Rad1/Hus1 complex. CTF18 interacts with SMC1A and RAD21. Interacts with DDX11.

It localises to the nucleus. Its function is as follows. Chromosome cohesion factor involved in sister chromatid cohesion and fidelity of chromosome transmission. Component of one of the cell nuclear antigen loader complexes, CTF18-replication factor C (CTF18-RFC), which consists of CTF18, CTF8, DCC1, RFC2, RFC3, RFC4 and RFC5. The CTF18-RFC complex binds to single-stranded and primed DNAs and has weak ATPase activity that is stimulated by the presence of primed DNA, replication protein A (RPA) and by proliferating cell nuclear antigen (PCNA). The CTF18-RFC complex catalyzes the ATP-dependent loading of PCNA onto primed and gapped DNA. Interacts with and stimulates DNA polymerase POLH. During DNA repair synthesis, involved in loading DNA polymerase POLE at the sites of local damage. The protein is Chromosome transmission fidelity protein 18 homolog (Chtf18) of Mus musculus (Mouse).